A 208-amino-acid polypeptide reads, in one-letter code: Interleukin-6 (208 aa).

The N-terminal stretch at 1 to 20 (MNSLSTIAFSLGLLLVTATA) is a signal peptide. Cys-67 and Cys-73 are joined by a disulfide. Ser-76 is modified (phosphoserine). A disulfide bond links Cys-96 and Cys-106. Asn-167 carries an N-linked (GlcNAc...) asparagine glycan.

This sequence belongs to the IL-6 superfamily. In terms of assembly, component of a hexamer of two molecules each of IL6, IL6R and IL6ST; first binds to IL6R to associate with the signaling subunit IL6ST. Interacts with IL6R (via the N-terminal ectodomain); this interaction may be affected by IL6R-binding with SORL1, hence decreasing IL6 cis signaling. Interacts with SORL1 (via the N-terminal ectodomain); this interaction leads to IL6 internalization and lysosomal degradation. May form a trimeric complex with the soluble SORL1 ectodomain and soluble IL6R receptor; this interaction might stabilize circulating IL6, hence promoting IL6 trans signaling.

Its subcellular location is the secreted. In terms of biological role, cytokine with a wide variety of biological functions in immunity, tissue regeneration, and metabolism. Binds to IL6R, then the complex associates to the signaling subunit IL6ST/gp130 to trigger the intracellular IL6-signaling pathway. The interaction with the membrane-bound IL6R and IL6ST stimulates 'classic signaling', whereas the binding of IL6 and soluble IL6R to IL6ST stimulates 'trans-signaling'. Alternatively, 'cluster signaling' occurs when membrane-bound IL6:IL6R complexes on transmitter cells activate IL6ST receptors on neighboring receiver cells. Functionally, IL6 is a potent inducer of the acute phase response. Rapid production of IL6 contributes to host defense during infection and tissue injury, but excessive IL6 synthesis is involved in disease pathology. In the innate immune response, is synthesized by myeloid cells, such as macrophages and dendritic cells, upon recognition of pathogens through toll-like receptors (TLRs) at the site of infection or tissue injury. In the adaptive immune response, is required for the differentiation of B cells into immunoglobulin-secreting cells. Plays a major role in the differentiation of CD4(+) T cell subsets. Essential factor for the development of T follicular helper (Tfh) cells that are required for the induction of germinal-center formation. Required to drive naive CD4(+) T cells to the Th17 lineage. Also required for proliferation of myeloma cells and the survival of plasmablast cells. Acts as an essential factor in bone homeostasis and on vessels directly or indirectly by induction of VEGF, resulting in increased angiogenesis activity and vascular permeability. Induces, through 'trans-signaling' and synergistically with IL1B and TNF, the production of VEGF. Involved in metabolic controls, is discharged into the bloodstream after muscle contraction increasing lipolysis and improving insulin resistance. 'Trans-signaling' in central nervous system also regulates energy and glucose homeostasis. Mediates, through GLP-1, crosstalk between insulin-sensitive tissues, intestinal L cells and pancreatic islets to adapt to changes in insulin demand. Also acts as a myokine. Plays a protective role during liver injury, being required for maintenance of tissue regeneration. Also has a pivotal role in iron metabolism by regulating HAMP/hepcidin expression upon inflammation or bacterial infection. Through activation of IL6ST-YAP-NOTCH pathway, induces inflammation-induced epithelial regeneration. The polypeptide is Interleukin-6 (IL6) (Delphinapterus leucas (Beluga whale)).